A 609-amino-acid chain; its full sequence is Sterol O-acyltransferase 2 (609 aa).

The segment covering methionine 1–aspartate 15 has biased composition (polar residues). Residues methionine 1–lysine 41 are disordered. 6 consecutive transmembrane segments (helical) span residues phenylalanine 152–isoleucine 172, leucine 195–valine 215, valine 229–alanine 249, cysteine 253–methionine 273, tryptophan 402–isoleucine 422, and phenylalanine 451–isoleucine 471. Residues phenylalanine 490–serine 496 carry the FYXDWWN motif motif. 2 consecutive transmembrane segments (helical) span residues alanine 534–phenylalanine 554 and isoleucine 589–phenylalanine 609. Histidine 546 is an active-site residue.

The protein belongs to the membrane-bound acyltransferase family. Sterol o-acyltransferase subfamily.

The protein resides in the endoplasmic reticulum membrane. Its activity is regulated as follows. Inhibited by the protoberberine derivative HWY-289 in a non-competitive manner. Inhibited by miconazole. Not inhibited by CI-976, polyoxin D, amphotericin B or nikkomycin Z. Its function is as follows. Sterol O-acyltransferase that catalyzes the formation of stery esters. In Candida albicans (Yeast), this protein is Sterol O-acyltransferase 2.